The following is an 88-amino-acid chain: HssA/B-like protein 12 (88 aa).

This sequence belongs to the hssA/B family.

The protein is HssA/B-like protein 12 (hssl12) of Dictyostelium discoideum (Social amoeba).